The sequence spans 926 residues: LPS-assembly protein LptD (926 aa).

The N-terminal stretch at 1 to 22 (MALKSPAFRKKFPLLVTGSLLA) is a signal peptide. A disordered region spans residues 58 to 99 (VDLPPRPVHDTTSVSSNGTVTSQSTSSGEQVAGTQLVTEAKG). Positions 68-85 (TTSVSSNGTVTSQSTSSG) are enriched in low complexity.

Belongs to the LptD family. As to quaternary structure, component of the lipopolysaccharide transport and assembly complex. Interacts with LptE and LptA.

It is found in the cell outer membrane. Functionally, together with LptE, is involved in the assembly of lipopolysaccharide (LPS) at the surface of the outer membrane. This is LPS-assembly protein LptD from Pseudomonas savastanoi pv. phaseolicola (strain 1448A / Race 6) (Pseudomonas syringae pv. phaseolicola (strain 1448A / Race 6)).